Consider the following 68-residue polypeptide: Conotoxin Mi11.1 (68 aa).

A signal peptide spans 1 to 26 (MMLRLTSVSCFLLVIACLNLFQVVLT). Intrachain disulfides connect cysteine 29/cysteine 43, cysteine 36/cysteine 48, cysteine 42/cysteine 52, and cysteine 47/cysteine 56. Tyrosine 60 is modified (tyrosine amide). Residues 64 to 68 (ATFQE) constitute a propeptide that is removed on maturation.

It belongs to the conotoxin I2 superfamily. In terms of tissue distribution, expressed by the venom duct.

Its subcellular location is the secreted. This is Conotoxin Mi11.1 from Conus miles (Soldier cone).